Consider the following 262-residue polypeptide: 5'-nucleotidase SurE (262 aa).

Positions 9, 10, 40, and 95 each coordinate a divalent metal cation.

It belongs to the SurE nucleotidase family. Requires a divalent metal cation as cofactor.

It is found in the cytoplasm. It catalyses the reaction a ribonucleoside 5'-phosphate + H2O = a ribonucleoside + phosphate. Functionally, nucleotidase that shows phosphatase activity on nucleoside 5'-monophosphates. The protein is 5'-nucleotidase SurE of Aliarcobacter butzleri (strain RM4018) (Arcobacter butzleri).